The following is a 222-amino-acid chain: Alpha-S2-casein (222 aa).

The signal sequence occupies residues 1 to 15; sequence MKFFIFTCLLAVALA. 13 positions are modified to phosphoserine: Ser23, Ser24, Ser25, Ser28, Ser46, Ser71, Ser72, Ser73, Ser76, Ser144, Ser146, Ser150, and Ser158. A repeat spans 76–140; it reads SAEVATEEVK…AVPITPTLNR (65 aa). The stretch at residues 158-222 is a repeat; sequence STEVFTKKTK…TKVIPYVRYL (65 aa).

The protein belongs to the alpha-casein family. As to expression, mammary gland specific. Secreted in milk.

The protein localises to the secreted. In terms of biological role, important role in the capacity of milk to transport calcium phosphate. Casocidin-I inhibits the growth of E.coli and S.carnosus. This chain is Alpha-S2-casein (CSN1S2), found in Bos taurus (Bovine).